The following is a 440-amino-acid chain: P47(GAG-CRK) protein (440 aa).

A gag first part region spans residues 1–208; the sequence is MEAVIKVISS…TPRGAEQPRA (208 aa). A PPXY motif motif is present at residues 174–177; the sequence is PPPY. Residues 183–230 are disordered; sequence YPSLAGVGEQQGQGGDTPRGAEQPRAGRGAGHRGLRRPAGRGQRVRPA. Positions 209–437 are CRK; that stretch reads GRGAGHRGLR…PSSASVSTLT (229 aa). A compositionally biased stretch (basic residues) spans 212–221; that stretch reads AGHRGLRRPA. An SH2 domain is found at 248–354; sequence WYWGRLSRGD…LDTTTLIEPV (107 aa). Residues 368 to 428 form the SH3 domain; it reads EEVEYVRALF…PVPYVEKCRP (61 aa). The segment at 438 to 440 is gag second part; sequence GGR.

The protein is P47(GAG-CRK) protein of Avian sarcoma virus CT10 (Avian sarcoma virus (strain CT10)).